Consider the following 333-residue polypeptide: 2-haloacrylate reductase (333 aa).

Alanine 153–glycine 159 serves as a coordination point for NADP(+).

It belongs to the zinc-containing alcohol dehydrogenase family.

The enzyme catalyses (S)-2-chloropropanoate + NADP(+) = 2-chloroacrylate + NADPH + H(+). In terms of biological role, involved in the degradation of unsaturated organohalogen compounds. Catalyzes the NADPH-dependent reduction of the carbon-carbon double bond of 2-chloroacrylate to produce (S)-2-chloropropionate, which is probably further metabolized to (R)-lactate by (S)-2-haloacid dehalogenase. Can also use 2-bromoacrylate as substrate. Does not act on acrylate, methacrylate, 1,4-benzoquinone and 1,4-naphthoquinone. This chain is 2-haloacrylate reductase, found in Burkholderia sp.